We begin with the raw amino-acid sequence, 221 residues long: Vacuolar protein sorting-associated protein 20 (221 aa).

A lipid anchor (N-myristoyl glycine) is attached at glycine 2. Residues 72–178 (QEHLLQQASD…LNPEKMNNAK (107 aa)) adopt a coiled-coil conformation. The interval 170 to 221 (NPEKMNNAKVANMPSTEGLPSLPQGEQTEQKEREEFATEERSDTKEPLALLS) is disordered. Positions 197 to 215 (TEQKEREEFATEERSDTKE) are enriched in basic and acidic residues.

Belongs to the SNF7 family. As to quaternary structure, core component of the ESCRT-III complex (endosomal sorting required for transport complex III). ESCRT-III appears to be sequentially assembled as a flat lattice on the endosome membrane and forms a transient 450 kDa complex that contains DID4, oligomerized SNF7, VPS20 and VPS24. SNF7 oligomerization into a membrane-associated filament is nucleated by association of SNF7 with VPS20; the process is terminated through association of VPS24, possibly by capping the SNF7 filament. VPS24 subsequently associates with DID4/VPS2. Interacts with the VPS4. Interacts with VPS25; the interaction mediates the association with the ESCRT-II complex.

Its subcellular location is the endosome membrane. It localises to the vacuole membrane. Class E VPS protein implicated in concentration and sorting of cargo proteins of the multivesicular body (MVB) for incorporation into intralumenal vesicles. The lumenal sequestrated membrane proteins will be targeted into the vacuole after fusion of the endosome with the vacuole. Acts a component of the ESCRT-III complex, which appears to be critical for late steps in MVB sorting, such as membrane invagination and final cargo sorting and recruitment of late-acting components of the sorting machinery. The MVB pathway requires the sequential function of ESCRT-O, -I,-II and -III complex assemblies. Required for the oligomerization of SNF7 into a membrane-associated filament. The VPS20-SNF7 subcomplex is responsible for the membrane association of the ESCRT-III complex. Also required for the RIM101 repressor proteolytic activation. In Saccharomyces cerevisiae (strain ATCC 204508 / S288c) (Baker's yeast), this protein is Vacuolar protein sorting-associated protein 20 (VPS20).